The sequence spans 394 residues: Tryptophan synthase beta chain (394 aa).

An N6-(pyridoxal phosphate)lysine modification is found at lysine 84.

It belongs to the TrpB family. Tetramer of two alpha and two beta chains. Requires pyridoxal 5'-phosphate as cofactor.

The catalysed reaction is (1S,2R)-1-C-(indol-3-yl)glycerol 3-phosphate + L-serine = D-glyceraldehyde 3-phosphate + L-tryptophan + H2O. It functions in the pathway amino-acid biosynthesis; L-tryptophan biosynthesis; L-tryptophan from chorismate: step 5/5. Functionally, the beta subunit is responsible for the synthesis of L-tryptophan from indole and L-serine. The protein is Tryptophan synthase beta chain of Clostridium acetobutylicum (strain ATCC 824 / DSM 792 / JCM 1419 / IAM 19013 / LMG 5710 / NBRC 13948 / NRRL B-527 / VKM B-1787 / 2291 / W).